A 654-amino-acid chain; its full sequence is Insulin receptor substrate 1 (654 aa).

Residues 3-107 (DIKKCGYLRK…WYQAILEVQA (105 aa)) form the PH domain. Tyrosine 36 is subject to Phosphotyrosine. Residues 126–230 (FREVWQVSVR…EAMKSLSEEF (105 aa)) enclose the IRS-type PTB domain. The disordered stretch occupies residues 228–329 (EEFRPRTKSQ…EYGSSPGVLE (102 aa)). Residues 235–245 (KSQSLSSTPIS) are compositionally biased toward polar residues. Serine 276 is modified (phosphoserine). A compositionally biased stretch (polar residues) spans 307 to 321 (NESSADYGSASSDEY). Position 345 is a phosphotyrosine; by INSR (tyrosine 345). 6 consecutive short sequence motifs (YXXM motif) follow at residues 345-348 (YISM), 384-387 (YAMM), 398-401 (YMPM), 411-414 (YMPM), 430-433 (YVMM), and 466-469 (YMNM). Phosphotyrosine; by INSR is present on residues tyrosine 398 and tyrosine 411. Residue tyrosine 430 is modified to Phosphotyrosine. Disordered regions lie at residues 473–494 (SRSASSTPPPQEAFLSSPGGPC) and 507–532 (YKMEPQPSARASCSSSSDSLEEVNAG). Low complexity predominate over residues 514–524 (SARASCSSSSD). Tyrosine 563 carries the phosphotyrosine; by INSR modification.

Interacts with the NPXY motif of tyrosine-phosphorylated igf1r and insr via the PTB domain. Binds to phosphatidylinositol 3-kinase p85 subunit via the phosphorylated YXXM motifs.

Functionally, may mediate the control of various cellular processes by insulin. When phosphorylated by the insulin receptor binds specifically to various cellular proteins containing SH2 domains such as phosphatidylinositol 3-kinase p85 subunit or grb2. Activates phosphatidylinositol 3-kinase when bound to the regulatory p85 subunit. In Xenopus tropicalis (Western clawed frog), this protein is Insulin receptor substrate 1.